The sequence spans 188 residues: MSQAPEARPSPPSVYHERQRLELCAVHALNNVLQEQLFSQEAADEICKRLAPDSRLNPHRSLLGTGNYDVNVIMAALQGLGLAAVWWDRRRPLSQLALPQVLGLILNLPSPVSLGLLSLPLRRRHWVALRQVDGIYYNLDSKLRAPEALGDEDGVRTFLAAALAQGLCEVLLVVTKEVEEAGCWLNTS.

In terms of domain architecture, Josephin spans 11-188 (PPSVYHERQR…EEAGCWLNTS (178 aa)). The active-site Nucleophile is cysteine 24. The active-site Proton acceptor is the histidine 125.

Its subcellular location is the cytoplasm. It is found in the cytosol. The enzyme catalyses Thiol-dependent hydrolysis of ester, thioester, amide, peptide and isopeptide bonds formed by the C-terminal Gly of ubiquitin (a 76-residue protein attached to proteins as an intracellular targeting signal).. In terms of biological role, cleaves 'Lys-63'-linked poly-ubiquitin chains, and with lesser efficiency 'Lys-48'-linked poly-ubiquitin chains (in vitro). May act as a deubiquitinating enzyme. This is Josephin-2 (Josd2) from Mus musculus (Mouse).